The following is a 172-amino-acid chain: S-ribosylhomocysteine lyase (172 aa).

Residues His-54, His-58, and Cys-128 each contribute to the Fe cation site.

The protein belongs to the LuxS family. In terms of assembly, homodimer. Fe cation is required as a cofactor.

It catalyses the reaction S-(5-deoxy-D-ribos-5-yl)-L-homocysteine = (S)-4,5-dihydroxypentane-2,3-dione + L-homocysteine. Involved in the synthesis of autoinducer 2 (AI-2) which is secreted by bacteria and is used to communicate both the cell density and the metabolic potential of the environment. The regulation of gene expression in response to changes in cell density is called quorum sensing. Catalyzes the transformation of S-ribosylhomocysteine (RHC) to homocysteine (HC) and 4,5-dihydroxy-2,3-pentadione (DPD). This chain is S-ribosylhomocysteine lyase, found in Vibrio cholerae serotype O1 (strain ATCC 39541 / Classical Ogawa 395 / O395).